The sequence spans 272 residues: Shikimate dehydrogenase (NADP(+)) (272 aa).

Shikimate-binding positions include 14–16 and Thr61; that span reads SLS. Residue Lys65 is the Proton acceptor of the active site. Asp102 lines the shikimate pocket. Residues 127 to 131, 151 to 156, and Leu215 contribute to the NADP(+) site; these read GAGGA and NRTPSK. Tyr217 is a binding site for shikimate. Gly239 is a binding site for NADP(+).

The protein belongs to the shikimate dehydrogenase family. As to quaternary structure, homodimer.

It catalyses the reaction shikimate + NADP(+) = 3-dehydroshikimate + NADPH + H(+). Its pathway is metabolic intermediate biosynthesis; chorismate biosynthesis; chorismate from D-erythrose 4-phosphate and phosphoenolpyruvate: step 4/7. Its function is as follows. Involved in the biosynthesis of the chorismate, which leads to the biosynthesis of aromatic amino acids. Catalyzes the reversible NADPH linked reduction of 3-dehydroshikimate (DHSA) to yield shikimate (SA). The protein is Shikimate dehydrogenase (NADP(+)) of Coxiella burnetii (strain CbuG_Q212) (Coxiella burnetii (strain Q212)).